The chain runs to 54 residues: UPF0391 membrane protein Tbd_2238 (54 aa).

The next 2 membrane-spanning stretches (helical) occupy residues 5-25 and 28-48; these read ALVFFIIAIVAAVFGFSGIAA and VGIAKILFVVFLIMAIATFVV.

It belongs to the UPF0391 family.

Its subcellular location is the cell membrane. The chain is UPF0391 membrane protein Tbd_2238 from Thiobacillus denitrificans (strain ATCC 25259 / T1).